Reading from the N-terminus, the 110-residue chain is IQ domain-containing protein J (110 aa).

The IQ domain maps to glutamate 47–leucine 67. The segment at arginine 63 to serine 99 is disordered. Over residues serine 76–serine 87 the composition is skewed to low complexity. Residues methionine 88 to serine 99 show a composition bias toward polar residues.

The chain is IQ domain-containing protein J from Mus musculus (Mouse).